A 445-amino-acid polypeptide reads, in one-letter code: Gasdermin-A (445 aa).

Residues 1–251 (MTMFENVTRA…VILIQASDVG (251 aa)) form a triggers pyroptosis region. 9-13 (RALAR) serves as a coordination point for a cardiolipin. The next 4 beta stranded transmembrane spans lie at 78–95 (NFGFKNMLDTRVEGDVDV), 99–120 (VKVKGTAGLSQNSTLEVQTLSV), 163–179 (VTLERAGKAEACFSLPF), and 183–197 (LGLQGSINHKEAVTI).

It belongs to the gasdermin family. Homooligomer; homooligomeric ring-shaped pore complex containing 18-36 subunits when inserted in the membrane. Cleavage by S.pyogenes SpeB relieves autoinhibition by releasing the N-terminal moiety (Gasdermin-A, N-terminal) that initiates pyroptosis. Post-translationally, palmitoylated. Expressed predominantly in the gastrointestinal tract and, at a lower level, in the skin. Also detected in mammary gland. In the gastrointestinal tract, mainly expressed in differentiated cells, including the differentiated cell layer of esophagus and mucus-secreting pit cells of the gastric epithelium. Down-regulated in gastric cancer cells.

The protein localises to the cytoplasm. It is found in the perinuclear region. The protein resides in the cytosol. Its subcellular location is the cell membrane. With respect to regulation, the full-length protein before cleavage is inactive: intramolecular interactions between N- and C-terminal domains mediate autoinhibition in the absence of activation signal. The intrinsic pyroptosis-inducing activity is carried by the released N-terminal moiety (Gasdermin-A, N-terminal) following cleavage by S.pyogenes effector protein SpeB. Its function is as follows. This form constitutes the precursor of the pore-forming protein and acts as a sensor of infection: upon infection by S.pyogenes, specifically cleaved by S.pyogenes effector protein SpeB in epithelial cells, releasing the N-terminal moiety (Gasdermin-A, N-terminal) that binds to membranes and forms pores, triggering pyroptosis. Functionally, pore-forming protein that causes membrane permeabilization and pyroptosis. Released upon cleavage by S.pyogenes effector protein SpeB, and binds to membrane inner leaflet lipids. Homooligomerizes within the membrane and forms pores of 10-15 nanometers (nm) of inner diameter, triggering pyroptosis. Pyroptosis triggers the elimination of the infected skin cell, depriving the pathogen of its protective niche, while inducing an inflammatory response. This ultimately prevents bacterial penetration of the epithelial barrier and a subsequent systemic dissemination of the pathogen. Binds to cardiolipin and other acidic phospholipids, such as phosphatidylserine, which mediate its targeting to the inner leaflet membrane. This Homo sapiens (Human) protein is Gasdermin-A.